The primary structure comprises 385 residues: MPWRLPTGHQLCRLCLLRKPRPALKIKPSSACVTYGTDSQSDKENKRTVEKLSACSVDIRKIRRLKGWVLLEEETYVEEIANILKELGANKTVIASILERCPEAIICSPAAVNTKRKLWQMVCKNEAELVQLIEQFPESFFTVKNQENQKLNVQFFQELGLRNVVISRFLTTASSIFHNPVENNKQMIGVLQESYLNLGGSEANAKVWLLKLLSQNPFIVLHSPRAVGETLKCLQGQGFTDSEVLQLLSKLKGFLFQLQPGSIQNSISFTKTTFECTDYDLRQLVVKCPALLCYPASVLEERIQALLKEGISIAQIRESPMVLELTPQIIQYRIRKLNSLGYGIKDGHLASLNGTKKEFEANFSKMQAKQGRPLFNPVASLKVEE.

A mitochondrion-targeting transit peptide spans 1 to 35; it reads MPWRLPTGHQLCRLCLLRKPRPALKIKPSSACVTY.

It belongs to the mTERF family. As to quaternary structure, monomer.

The protein resides in the mitochondrion matrix. It localises to the mitochondrion nucleoid. Its function is as follows. Binds mitochondrial DNA and plays a role in the regulation of transcription of mitochondrial mRNA and rRNA species. In Mus musculus (Mouse), this protein is Transcription termination factor 2, mitochondrial (Mterf2).